A 591-amino-acid polypeptide reads, in one-letter code: ADP-ribosylating toxin CARDS (591 aa).

Residues 1–205 form a mono-ADP ribosyltransferase (mART) domain region; sequence MPNPVRFVYR…LPTPGIATPV (205 aa). Residues 206–256 are NAD(+)-binding pocket; the sequence is HLSIPQAASVADVSEGTSASLSFACPDWSPPSSNGENPLDKCIAEKIDNYN. A disulfide bridge links Cys230 with Cys247. A KELED motif, involved in host ER trafficking, solvent exposed in the crystal structure motif is present at residues 268 to 272; it reads KELED. The segment at 273-439 is D2 domain; the sequence is TPVYLRGIKT…QFVTMRAAST (167 aa). Positions 440-591 are D3 domain; the sequence is FFVDVQLGWY…ILVKDGFDRF (152 aa).

This sequence belongs to the bacterial exotoxin subunit A family. As to quaternary structure, monomer. Binds to host (human) pulmonary surfactant-associated protein A1 (SFTPA1), the major mammalian protein component of pulmonary surfactant. Binds to host (human) surface annexin A2 (ANXA2) on the cell surface; anti-ANXA2 antibodies decrease binding to cells. Interacts with cytosolic host (human) NLRP3, which it ADP-ribosylates in vitro. In terms of processing, 8 hours after treatment of HeLa cells with purified protein, a substantial amount is processed to 2 nearly equal-sized fragments. The disulfide bond between Cys-230 and Cys-247 is required to for the toxin to exert its mART and vacuolating activities within target cells, and for protein processing. Acidic pH in the endosome and retrograde transport are required for toxin cleavage, which is required for both toxin activities. Trypsin treatment under mild conditions leads to cleavage at Lys-305 and Lys-307; the 2 proteins fragments remain associated and can be internalized and vacuolate HeLa cells.

Its subcellular location is the cell membrane. The protein resides in the cytoplasm. The protein localises to the cell surface. It is found in the cell projection. It localises to the attachment organelle. Its subcellular location is the host cytoplasm. The protein resides in the host cytosol. The protein localises to the host endoplasmic reticulum. Its activity is regulated as follows. In vitro ADP-ribosylation is enhanced by dithiotheritol. In terms of biological role, the main virulence factor for this bacteria, a mono-ADP-ribosylating toxin (mART), that transfers the ADP-ribosyl group from NAD(+) to multiple target proteins in vitro. Also elicits cytopathic effects in mammalian cells, such as disorganization and disruption of respiratory epithelial integrity in tracheal epithelium and vacuolization in the cytoplasm of CHO and HeLa cells as well as in mice and baboons. Treatment of mice or baboons with CARDS elicits a response that is consistent with human M.pneumoniae infections and mouse models of both infection and intoxication, suggesting that CARDS toxin is sufficient to cause prolonged inflammatory responses and airway dysfunction. Treatment of baboons with CARDS induces a number of cytokines; G-CSF (40 fold), IL-1Ra (10 fold), IL-6 and IL-8 (333 and 100 fold, respectively), MIP-1a (5 fold), and RANTES (9 fold). Treatment of mice gives a similar response. Binds phosphatidyl choline, dipalmitoylphosphatidylcholine (DPPC) and sphingomyelin via domains D2 plus D3. Functionally, has at least 2 host receptors SFTPA1 and ANXA2. Internalized by a clathrin-mediated process; protein is rapidly taken up at 37 degrees Celsius. Clathrin-independent or caveolin-dependent endocytosis were not detected. In HeLa cells internalized CARDS trafficks toward the nucleus by retrograde transport from early to late endosomes, then the Golgi apparatus; at 16 hours most toxin is concentrated in the perinuclear region in the host endoplasmic reticulum (ER). Failure to localize to the host ER prevents ADP-ribosylation and vacuolization. An acidic compartment is required to mediate retrotransport and processing of toxin into an N-terminal fragment with mART activity and a C-terminal fragment that is able to induce vacuolization. Induces the host NLRP3 inflammasome to release interleukin-1 beta (IL-1 beta); IL-1 beta release requires ADP-ribosylation activity and uptake by host macrophages. In the host colocalizes with the NLRP3 inflammasome; ADP-ribosylates NLRP3 in vitro. ADP-ribosylation of NLRP3 may lead to hyperinflammation. The sequence is that of ADP-ribosylating toxin CARDS from Mycoplasma pneumoniae (strain ATCC 29342 / M129 / Subtype 1) (Mycoplasmoides pneumoniae).